We begin with the raw amino-acid sequence, 446 residues long: Cyclin-F2-2 (446 aa).

A disordered region spans residues 191–216; it reads YNGDNDAPAPDNSTASRPQLCAPYDD.

Belongs to the cyclin family. Cyclin F subfamily.

This chain is Cyclin-F2-2 (CYCF2-2), found in Oryza sativa subsp. japonica (Rice).